The following is a 307-amino-acid chain: Exosome complex component RRP45A (307 aa).

The protein belongs to the RNase PH family. As to expression, expressed in roots, leaves, stems, buds and siliques.

It localises to the cytoplasm. The protein resides in the nucleus. Its function is as follows. Probable 3'-&gt;5' exoribonuclease involved in the regulation of cuticular wax biosynthesis. Can perform exosomal functions and partially complement the yeast rrp45 null mutant. This chain is Exosome complex component RRP45A, found in Arabidopsis thaliana (Mouse-ear cress).